Here is a 362-residue protein sequence, read N- to C-terminus: Phosphoserine aminotransferase (362 aa).

Residues serine 9 and arginine 42 each contribute to the L-glutamate site. Residues 76-77, tryptophan 102, threonine 153, aspartate 174, and glutamine 197 each bind pyridoxal 5'-phosphate; that span reads GR. At lysine 198 the chain carries N6-(pyridoxal phosphate)lysine. Pyridoxal 5'-phosphate is bound at residue 239–240; it reads NT.

Belongs to the class-V pyridoxal-phosphate-dependent aminotransferase family. SerC subfamily. As to quaternary structure, homodimer. The cofactor is pyridoxal 5'-phosphate.

The protein resides in the cytoplasm. The enzyme catalyses O-phospho-L-serine + 2-oxoglutarate = 3-phosphooxypyruvate + L-glutamate. It carries out the reaction 4-(phosphooxy)-L-threonine + 2-oxoglutarate = (R)-3-hydroxy-2-oxo-4-phosphooxybutanoate + L-glutamate. Its pathway is amino-acid biosynthesis; L-serine biosynthesis; L-serine from 3-phospho-D-glycerate: step 2/3. It functions in the pathway cofactor biosynthesis; pyridoxine 5'-phosphate biosynthesis; pyridoxine 5'-phosphate from D-erythrose 4-phosphate: step 3/5. In terms of biological role, catalyzes the reversible conversion of 3-phosphohydroxypyruvate to phosphoserine and of 3-hydroxy-2-oxo-4-phosphonooxybutanoate to phosphohydroxythreonine. This Klebsiella pneumoniae (strain 342) protein is Phosphoserine aminotransferase.